The following is a 310-amino-acid chain: tRNA dimethylallyltransferase (310 aa).

Residue 14-21 (GPTASGKT) participates in ATP binding. A substrate-binding site is contributed by 16-21 (TASGKT). 3 interaction with substrate tRNA regions span residues 39–42 (DSAL), 163–167 (QRLSR), and 244–249 (RCVGYR).

The protein belongs to the IPP transferase family. As to quaternary structure, monomer. Mg(2+) is required as a cofactor.

The enzyme catalyses adenosine(37) in tRNA + dimethylallyl diphosphate = N(6)-dimethylallyladenosine(37) in tRNA + diphosphate. Functionally, catalyzes the transfer of a dimethylallyl group onto the adenine at position 37 in tRNAs that read codons beginning with uridine, leading to the formation of N6-(dimethylallyl)adenosine (i(6)A). This Aeromonas salmonicida (strain A449) protein is tRNA dimethylallyltransferase.